We begin with the raw amino-acid sequence, 139 residues long: Protein COLD-REGULATED 15A, chloroplastic (139 aa).

A chloroplast-targeting transit peptide spans 1–40 (MAMSFSGAVLTGMASSFHSGAKQSSFGAVRVGQKTQFVVV).

This sequence belongs to the COR15 protein family. As to quaternary structure, forms homooligomers which interact with potential stromal substrates in the stroma of chloroplasts. Interacts with the galactose headgroup of the chloroplast lipid monogalactosyldiacylglycerol (MGDG).

It is found in the plastid. Its subcellular location is the chloroplast stroma. Exhibits cryoprotective activity toward stromal substrates (e.g. LDH and rubisco) in chloroplasts and in protoplasts and confers freezing tolerance to plants in a CBF-dependent manner. Protectant against various stresses (e.g. cold, drought and heat stress) by preventing protein aggregation (e.g. LDH) and attenuating enzyme inactivation. Influences the intrinsic curvature of the inner membrane of the chloroplast envelope, and modulates the freeze-induced lamellar-to-hexagonal II phase transitions that occur in regions where the plasma membrane is brought into close apposition with the chloroplast envelope during freeze-induced osmotic contraction. Mediates a shift in the melting curves of phospholipids-containing membranes to lower temperatures. Involved in the regulation of leaf senescence by abscisic acid (ABA) in a VNI2-dependent manner. The chain is Protein COLD-REGULATED 15A, chloroplastic from Arabidopsis thaliana (Mouse-ear cress).